The following is a 956-amino-acid chain: Outer capsid protein VP2 (956 aa).

This sequence belongs to the orbivirus VP2 family.

It localises to the virion. The VP2 protein is one of the two proteins (with VP5) which constitute the virus particle outer capsid. It is the major target of the host immunogenic response. Responsible for viral attachment to target host cell, probably by binding to sialic acid. This attachment induces virion internalization predominantly through clathrin-dependent endocytosis. This is Outer capsid protein VP2 (Segment-2) from Bluetongue virus 10 (isolate USA) (BTV 10).